We begin with the raw amino-acid sequence, 357 residues long: MNISSFSDNLTKILGKYEDLSEKLSSGIGGEEFVKASKEYADLEDIVQKIKEYNKAKAELEEANNFKQEPSLDKATLEMIEEEIRNLEDSLPTLERSVKIALLPKDEADSKSAIIEIRAGTGGEEAALFAAKLFNMYQRYAELKGWRFEILSIDETGIGGYKEVSASIKGKDVFSKLKFESGVHRVQRVPETESQGRIHTSAATVAVLPEVEDVDIKLEEKDLRIDTYRASGAGGQHVNTTDSAVRITHIPTGITVALQDEKSQHKNKAKALKILRARIYEEERRKKDQERANNRREQIGSGDRSERIRTYNFPQGRVSDHRINLTLYKIDEVINGQLDEFIEALIANDEAKKLSDI.

Gln-236 carries the N5-methylglutamine modification. Positions 283–309 are enriched in basic and acidic residues; sequence ERRKKDQERANNRREQIGSGDRSERIR. Positions 283–313 are disordered; it reads ERRKKDQERANNRREQIGSGDRSERIRTYNF.

It belongs to the prokaryotic/mitochondrial release factor family. Methylated by PrmC. Methylation increases the termination efficiency of RF1.

It localises to the cytoplasm. In terms of biological role, peptide chain release factor 1 directs the termination of translation in response to the peptide chain termination codons UAG and UAA. This is Peptide chain release factor 1 from Rickettsia bellii (strain OSU 85-389).